Here is a 90-residue protein sequence, read N- to C-terminus: Small ribosomal subunit protein bS20 (90 aa).

Residues 1–29 form a disordered region; that stretch reads MANTASAEKRNRQAQKRRARNVQVRTGVK.

Belongs to the bacterial ribosomal protein bS20 family.

In terms of biological role, binds directly to 16S ribosomal RNA. The polypeptide is Small ribosomal subunit protein bS20 (Anaeromyxobacter sp. (strain Fw109-5)).